The sequence spans 871 residues: Alanine--tRNA ligase (871 aa).

Residues H561, H565, C665, and H669 each coordinate Zn(2+).

This sequence belongs to the class-II aminoacyl-tRNA synthetase family. The cofactor is Zn(2+).

It localises to the cytoplasm. The enzyme catalyses tRNA(Ala) + L-alanine + ATP = L-alanyl-tRNA(Ala) + AMP + diphosphate. In terms of biological role, catalyzes the attachment of alanine to tRNA(Ala) in a two-step reaction: alanine is first activated by ATP to form Ala-AMP and then transferred to the acceptor end of tRNA(Ala). Also edits incorrectly charged Ser-tRNA(Ala) and Gly-tRNA(Ala) via its editing domain. This is Alanine--tRNA ligase from Dehalococcoides mccartyi (strain ATCC BAA-2266 / KCTC 15142 / 195) (Dehalococcoides ethenogenes (strain 195)).